We begin with the raw amino-acid sequence, 381 residues long: Alkanesulfonate monooxygenase (381 aa).

The protein belongs to the SsuD family. Homotetramer.

The enzyme catalyses an alkanesulfonate + FMNH2 + O2 = an aldehyde + FMN + sulfite + H2O + 2 H(+). In terms of biological role, catalyzes the desulfonation of aliphatic sulfonates. The protein is Alkanesulfonate monooxygenase of Escherichia coli O157:H7.